Consider the following 1038-residue polypeptide: Protein transport protein SEC24 A (1038 aa).

Residues 1–247 (MGTENQGYPN…PPHTGGFAQR (247 aa)) are disordered. Over residues 22 to 33 (SAPPPGIPPQSG) the composition is skewed to pro residues. Zn(2+)-binding residues include Cys-371, Cys-374, Cys-393, and Cys-396. The zinc finger-like stretch occupies residues 371 to 396 (CRRCRTYVNPFVTFTDSGRKWRCNIC).

The protein belongs to the SEC23/SEC24 family. SEC24 subfamily. In terms of assembly, component of the coat protein complex II (COPII), composed of at least five proteins: the Sec23/24 complex, the Sec13/31 complex and Sar1. Interacts with SEC221, SEC23E/SEC23A, SEC23B, SEC23G/SEC23C and SEC23F/SEC23D. (Microbial infection) Interacts with turnip mosaic virus (TuMV) 6K2 in COPII-coated vesicles. As to expression, mainly expressed in pollen, leaves, inflorescences, roots and stems, and, to a lower extent, in cotyledons, petioles and hypocotyls.

It localises to the cytoplasmic vesicle. Its subcellular location is the COPII-coated vesicle membrane. The protein resides in the endoplasmic reticulum membrane. The protein localises to the golgi apparatus membrane. It is found in the cytoplasm. It localises to the cytosol. Functionally, essential protein. Component of the coat protein complex II (COPII), that covers ER-derived vesicles involved in transport from the endoplasmic reticulum to the Golgi apparatus. COPII is composed of at least five proteins: the SEC23/24 complex, the SEC13/31 complex, and the protein SAR1. Acts in the cytoplasm to promote the transport of secretory, plasma membrane, and vacuolar proteins from the endoplasmic reticulum to the Golgi complex. Involved in maintaining the dynamic identity of organelles of the early secretory pathway. Regulates cell size patterning, and prevents CDKA;1-, DEK1- and ACR4-dependent endoreduplication and giant cells formation in sepals. Required for male gametophytes (pollen grains) development and transmission. Its function is as follows. (Microbial infection) Contributes to viral systemic infection of turnip mosaic virus (TuMV) by triggering the formation of host endoplasmic reticulum (ER)-derived viral vesicles that carry the viral RNA (vRNA) to plasmodesmata for cell-to-cell viral movement. The protein is Protein transport protein SEC24 A of Arabidopsis thaliana (Mouse-ear cress).